The primary structure comprises 205 residues: Recombination protein RecR (205 aa).

The C4-type zinc-finger motif lies at 60 to 75 (CKVCHNISDTETCRIC). Residues 83–178 (STICVVESIR…KLSVIARGIS (96 aa)) form the Toprim domain.

This sequence belongs to the RecR family.

In terms of biological role, may play a role in DNA repair. It seems to be involved in an RecBC-independent recombinational process of DNA repair. It may act with RecF and RecO. This Phocaeicola vulgatus (strain ATCC 8482 / DSM 1447 / JCM 5826 / CCUG 4940 / NBRC 14291 / NCTC 11154) (Bacteroides vulgatus) protein is Recombination protein RecR.